Here is a 440-residue protein sequence, read N- to C-terminus: Probable exopolygalacturonase C (440 aa).

The first 21 residues, 1–21 (MLITNPALLGILASLAPLALG), serve as a signal peptide directing secretion. Residues N24, N84, N151, and N219 are each glycosylated (N-linked (GlcNAc...) asparagine). 2 PbH1 repeats span residues 217–238 (GTNI…AVNT) and 240–261 (SHNI…SIGS). The active-site Proton donor is D231. Residue H255 is part of the active site. N-linked (GlcNAc...) asparagine glycosylation occurs at N271. Residues 272 to 293 (ITNLRFEDVTVIDALYAARFKS) form a PbH1 3 repeat. Residues N313 and N350 are each glycosylated (N-linked (GlcNAc...) asparagine). The cysteines at positions 389 and 395 are disulfide-linked. N-linked (GlcNAc...) asparagine glycosylation occurs at N434.

Belongs to the glycosyl hydrolase 28 family.

The protein localises to the secreted. It carries out the reaction [(1-&gt;4)-alpha-D-galacturonosyl](n) + H2O = alpha-D-galacturonate + [(1-&gt;4)-alpha-D-galacturonosyl](n-1). Specific in hydrolyzing the terminal glycosidic bond of polygalacturonic acid and oligogalacturonates. The chain is Probable exopolygalacturonase C (pgxC) from Neosartorya fischeri (strain ATCC 1020 / DSM 3700 / CBS 544.65 / FGSC A1164 / JCM 1740 / NRRL 181 / WB 181) (Aspergillus fischerianus).